The primary structure comprises 419 residues: Tol-Pal system protein TolB (419 aa).

An N-terminal signal peptide occupies residues 1-17; sequence MRFIGLVLLLLSVKLFG.

It belongs to the TolB family. As to quaternary structure, the Tol-Pal system is composed of five core proteins: the inner membrane proteins TolA, TolQ and TolR, the periplasmic protein TolB and the outer membrane protein Pal. They form a network linking the inner and outer membranes and the peptidoglycan layer.

The protein localises to the periplasm. Functionally, part of the Tol-Pal system, which plays a role in outer membrane invagination during cell division and is important for maintaining outer membrane integrity. This Helicobacter hepaticus (strain ATCC 51449 / 3B1) protein is Tol-Pal system protein TolB.